Consider the following 157-residue polypeptide: Probable calcium-binding protein CML15 (157 aa).

4 consecutive EF-hand domains span residues 3–38 (DQIR…LGLK), 39–74 (PSGD…DLNE), 78–113 (INSE…MGQP), and 114–149 (LTYK…SAVD). Ca(2+) is bound by residues Asp16, Asp18, Asp20, Ser22, Glu27, Asp52, Asn54, Asn56, Glu63, Asp91, Asp93, Asn95, Glu102, Asp127, Asn129, Asp131, and Glu138.

In terms of biological role, potential calcium sensor. The sequence is that of Probable calcium-binding protein CML15 (CML15) from Arabidopsis thaliana (Mouse-ear cress).